The primary structure comprises 96 residues: Probable Fe(2+)-trafficking protein (96 aa).

The segment at 21–40 (LPKMPHPPFPNKKGQELQET) is disordered.

This sequence belongs to the Fe(2+)-trafficking protein family.

Could be a mediator in iron transactions between iron acquisition and iron-requiring processes, such as synthesis and/or repair of Fe-S clusters in biosynthetic enzymes. The sequence is that of Probable Fe(2+)-trafficking protein from Psychrobacter arcticus (strain DSM 17307 / VKM B-2377 / 273-4).